We begin with the raw amino-acid sequence, 397 residues long: uncharacterized protein (397 aa).

4 consecutive transmembrane segments (helical) span residues 62-79, 92-109, 135-154, and 167-189; these read VLLFGILIFSIFVALIAI, WYGLLAFGVLTSLELVVT, VVFLPLICVYSLSILYSTLS, and AFLKTMLFTLLICSFILNFFPGI.

It is found in the cell membrane. This is an uncharacterized protein from Archaeoglobus fulgidus (strain ATCC 49558 / DSM 4304 / JCM 9628 / NBRC 100126 / VC-16).